Consider the following 376-residue polypeptide: Putative glutamate--cysteine ligase 2-1 (376 aa).

Belongs to the glutamate--cysteine ligase type 2 family. YbdK subfamily.

The enzyme catalyses L-cysteine + L-glutamate + ATP = gamma-L-glutamyl-L-cysteine + ADP + phosphate + H(+). Its function is as follows. ATP-dependent carboxylate-amine ligase which exhibits weak glutamate--cysteine ligase activity. This Mycobacterium sp. (strain JLS) protein is Putative glutamate--cysteine ligase 2-1.